Here is a 210-residue protein sequence, read N- to C-terminus: Large ribosomal subunit protein bL25 (210 aa).

It belongs to the bacterial ribosomal protein bL25 family. CTC subfamily. As to quaternary structure, part of the 50S ribosomal subunit; part of the 5S rRNA/L5/L18/L25 subcomplex. Contacts the 5S rRNA. Binds to the 5S rRNA independently of L5 and L18.

Functionally, this is one of the proteins that binds to the 5S RNA in the ribosome where it forms part of the central protuberance. The polypeptide is Large ribosomal subunit protein bL25 (Herminiimonas arsenicoxydans).